A 605-amino-acid chain; its full sequence is Poly [ADP-ribose] polymerase 2-B (605 aa).

Residues 96–122 (NAAAAAAVTDGGDQDKTKSAKDDDGDD) are disordered. A compositionally biased stretch (basic and acidic residues) spans 108 to 122 (DQDKTKSAKDDDGDD). The 108-residue stretch at 153 to 260 (AYHVLQVGDE…TKLETRTASF (108 aa)) folds into the WGR domain. In terms of domain architecture, PARP alpha-helical spans 250-370 (ETKLETRTAS…EIEIAIKLLE (121 aa)). Residues 378–605 (HPLYARYKQF…NVNFNFKRWG (228 aa)) form the PARP catalytic domain.

It belongs to the ARTD/PARP family.

The protein localises to the nucleus. It carries out the reaction NAD(+) + (ADP-D-ribosyl)n-acceptor = nicotinamide + (ADP-D-ribosyl)n+1-acceptor + H(+).. The enzyme catalyses L-aspartyl-[protein] + NAD(+) = 4-O-(ADP-D-ribosyl)-L-aspartyl-[protein] + nicotinamide. It catalyses the reaction L-glutamyl-[protein] + NAD(+) = 5-O-(ADP-D-ribosyl)-L-glutamyl-[protein] + nicotinamide. Its function is as follows. Involved in the base excision repair (BER) pathway, by catalyzing the poly(ADP-ribosyl)ation of a limited number of acceptor proteins involved in chromatin architecture and in DNA metabolism. This modification follows DNA damages and appears as an obligatory step in a detection/signaling pathway leading to the reparation of DNA strand breaks. This Oryza sativa subsp. japonica (Rice) protein is Poly [ADP-ribose] polymerase 2-B (PARP2-B).